The primary structure comprises 503 residues: Lanosterol 14-alpha demethylase (503 aa).

A helical transmembrane segment spans residues 24–44 (GNLLSTLLIACAFTLSLVYLF). Cys-449 is a binding site for heme.

The protein belongs to the cytochrome P450 family. The cofactor is heme. In terms of processing, ubiquitinated by MARCHF6, leading to proteasomal degradation.

It is found in the endoplasmic reticulum membrane. It localises to the microsome membrane. The enzyme catalyses a 14alpha-methyl steroid + 3 reduced [NADPH--hemoprotein reductase] + 3 O2 = a Delta(14) steroid + formate + 3 oxidized [NADPH--hemoprotein reductase] + 4 H2O + 4 H(+). It catalyses the reaction lanosterol + 3 reduced [NADPH--hemoprotein reductase] + 3 O2 = 4,4-dimethyl-5alpha-cholesta-8,14,24-trien-3beta-ol + formate + 3 oxidized [NADPH--hemoprotein reductase] + 4 H2O + 4 H(+). It carries out the reaction 24,25-dihydrolanosterol + 3 reduced [NADPH--hemoprotein reductase] + 3 O2 = 4,4-dimethyl-8,14-cholestadien-3beta-ol + formate + 3 oxidized [NADPH--hemoprotein reductase] + 4 H2O + 4 H(+). The catalysed reaction is a 14alpha-methyl steroid + reduced [NADPH--hemoprotein reductase] + O2 = a 14alpha-hydroxymethyl steroid + oxidized [NADPH--hemoprotein reductase] + H2O + H(+). The enzyme catalyses a 14alpha-hydroxymethyl steroid + reduced [NADPH--hemoprotein reductase] + O2 = a 14alpha-formyl steroid + oxidized [NADPH--hemoprotein reductase] + 2 H2O + H(+). It catalyses the reaction a 14alpha-formyl steroid + reduced [NADPH--hemoprotein reductase] + O2 = a Delta(14) steroid + formate + oxidized [NADPH--hemoprotein reductase] + H2O + 2 H(+). It carries out the reaction lanosterol + reduced [NADPH--hemoprotein reductase] + O2 = 32-hydroxylanosterol + oxidized [NADPH--hemoprotein reductase] + H2O + H(+). The catalysed reaction is 32-hydroxylanosterol + reduced [NADPH--hemoprotein reductase] + O2 = 32-oxolanosterol + oxidized [NADPH--hemoprotein reductase] + 2 H2O + H(+). The enzyme catalyses 32-oxolanosterol + reduced [NADPH--hemoprotein reductase] + O2 = 4,4-dimethyl-5alpha-cholesta-8,14,24-trien-3beta-ol + formate + oxidized [NADPH--hemoprotein reductase] + H2O + 2 H(+). It catalyses the reaction 24,25-dihydrolanosterol + reduced [NADPH--hemoprotein reductase] + O2 = 32-hydroxy-24,25-dihydrolanosterol + oxidized [NADPH--hemoprotein reductase] + H2O + H(+). It carries out the reaction 32-hydroxy-24,25-dihydrolanosterol + reduced [NADPH--hemoprotein reductase] + O2 = 32-oxo-24,25-dihydrolanosterol + oxidized [NADPH--hemoprotein reductase] + 2 H2O + H(+). The catalysed reaction is 32-oxo-24,25-dihydrolanosterol + reduced [NADPH--hemoprotein reductase] + O2 = 4,4-dimethyl-8,14-cholestadien-3beta-ol + formate + oxidized [NADPH--hemoprotein reductase] + H2O + 2 H(+). It functions in the pathway steroid biosynthesis; zymosterol biosynthesis; zymosterol from lanosterol: step 1/6. Its activity is regulated as follows. Inhibited by azalanstat. Inhibited by azole antifungal agents ketoconazole, itraconazole and fluconazole. Sterol 14alpha-demethylase that plays a critical role in the cholesterol biosynthesis pathway, being cholesterol the major sterol component in mammalian membranes as well as a precursor for bile acid and steroid hormone synthesis. Cytochrome P450 monooxygenase that catalyzes the three-step oxidative removal of the 14alpha-methyl group (C-32) of sterols such as lanosterol (lanosta-8,24-dien-3beta-ol) and 24,25-dihydrolanosterol (DHL) in the form of formate, and converts the sterols to 4,4-dimethyl-5alpha-cholesta-8,14,24-trien-3beta-ol and 4,4-dimethyl-8,14-cholestadien-3beta-ol, respectively, which are intermediates of cholesterol biosynthesis. Can also demethylate substrates not intrinsic to mammals, such as eburicol (24-methylene-24,25-dihydrolanosterol), but at a lower rate than DHL. In Mus musculus (Mouse), this protein is Lanosterol 14-alpha demethylase.